A 1449-amino-acid polypeptide reads, in one-letter code: uncharacterized protein (1449 aa).

The segment covering 1–13 (MELRSDASHKENV) has biased composition (basic and acidic residues). Disordered stretches follow at residues 1–32 (MELRSDASHKENVSPKPAALPKPEQRRFRRSL), 123–201 (SNLS…LRSW), 258–298 (APQE…RRRR), 315–437 (LSDS…NKAQ), 523–551 (KQVQPHMQAGPGSPPSRRAQGKGLSLGRS), 1257–1278 (DQGPRAHSSPEPRACKAQSKAH), and 1399–1449 (RLAA…QLQL). The segment covering 123 to 133 (SNLSINETSSP) has biased composition (polar residues). Composition is skewed to polar residues over residues 315 to 333 (LSDSWAQSKLMSPETTLGT) and 384 to 394 (PCSSAFSNTAW). The span at 400–419 (QKGEEGAPRERVHREEERTA) shows a compositional bias: basic and acidic residues. Over residues 426-437 (VPASSASKNKAQ) the composition is skewed to polar residues. Residues 1258–1270 (QGPRAHSSPEPRA) show a composition bias toward basic and acidic residues.

This is an uncharacterized protein from Homo sapiens (Human).